The sequence spans 430 residues: C4-dicarboxylate transport protein (430 aa).

9 helical membrane passes run 8-28, 44-64, 76-96, 144-164, 184-204, 222-242, 289-309, 326-346, and 352-372; these read SLYF…HFYP, LIKM…IAGM, IALL…LVIV, AFAS…GFAL, VIFG…FGAM, LIIC…GSIA, VVGL…SIYL, VIHQ…AAGV, and IVLA…LALI.

This sequence belongs to the dicarboxylate/amino acid:cation symporter (DAACS) (TC 2.A.23) family.

It localises to the cell inner membrane. In terms of biological role, responsible for the transport of dicarboxylates such as succinate, fumarate, and malate from the periplasm across the membrane. This is C4-dicarboxylate transport protein from Yersinia enterocolitica serotype O:8 / biotype 1B (strain NCTC 13174 / 8081).